Here is a 490-residue protein sequence, read N- to C-terminus: MGIKKMFKKKDPTEGEIRDELTQIGVTTKSDNKTRQEKFGAFKNYAQDRQNAKPGFQPVNPYANVNAGNGNGNPYAQQEAGGDGDGEAMGGNNSSPYDKTTNPYGSRSERANNPYGNGNVGASSRGERAGGRNTQTNPYGGARASGRASGSKPNPYGGVQNDGALADDTESINTAVTGYADPYGNETARASRQSTRRPRAYDEESLDLNAIPSHQAYTPSKPIKRTQMRDDETLDLNDLPEEEDLNLDVDELPEQEQVDSEDDEVEAIKQDIRFIKQESVGSTRNTLRMAQEADASATNTLGMMGSQSERLYNAESNLLLADTQSKIADQKVKDLKRYNRSIFVPAYGNPFNKKSRLRQQEMQIKADKAQEKYLRDTNRKEMYASEQRIKQGISQNATSSDVHQKYRSERDLEAAQRYQFENDSEDDEMEKELANNLDQIGLYSKKLQSSAKTMGNEVDSQNKRLGQIEEDADRLDINVHMNSARLNNIR.

A disordered region spans residues Met1 to Asp244. Composition is skewed to basic and acidic residues over residues Lys9 to Leu21 and Ser30 to Gly40. Over residues Pro58–Ala80 the composition is skewed to low complexity. Residues Ser94–Gly105 are compositionally biased toward polar residues. A compositionally biased stretch (low complexity) spans Gly140 to Ser151. The span at Glu232–Asp244 shows a compositional bias: acidic residues. Positions Arg273–Leu335 constitute a t-SNARE coiled-coil homology 1 domain. The tract at residues Ile389–Arg410 is disordered. Polar residues predominate over residues Gly392–Asp401. One can recognise a t-SNARE coiled-coil homology 2 domain in the interval Asp427–Ile489.

This sequence belongs to the SNAP-25 family.

The chain is Protein transport protein SEC9 (SEC9) from Debaryomyces hansenii (strain ATCC 36239 / CBS 767 / BCRC 21394 / JCM 1990 / NBRC 0083 / IGC 2968) (Yeast).